A 289-amino-acid chain; its full sequence is Agamous-like MADS-box protein AGL93 (289 aa).

The MADS-box domain maps to 18–78 (QTCFKKSSLS…GKLIKTWPDD (61 aa)). The disordered stretch occupies residues 151 to 197 (EFGQTRAVSSTTNPLSPPPSLIEDHRHQQRTEPLMSGVSNTEQDLST). Positions 187-197 (GVSNTEQDLST) are enriched in polar residues.

Expressed in pollen.

Its subcellular location is the nucleus. Its function is as follows. Probable transcription factor. This is Agamous-like MADS-box protein AGL93 from Arabidopsis thaliana (Mouse-ear cress).